The sequence spans 497 residues: NAD(P)H-quinone oxidoreductase subunit 2, chloroplastic (497 aa).

The next 14 helical transmembrane spans lie at 13–33 (VILP…LDLI), 37–57 (SAWL…ALVF), 76–96 (FTIS…LIST), 103–123 (GMGL…GLFL), 129–149 (LVTV…LVGY), 164–184 (LLMG…LYGL), 206–226 (IAVW…LSAF), 240–260 (PTPV…ALAT), 274–294 (WHVL…LIAA), 311–331 (AGYL…GMIT), 332–352 (YMVT…LFGL), 373–393 (AFCL…AGFF), 406–426 (GLYL…YYYL), and 462–482 (VGIA…NPII).

The protein belongs to the complex I subunit 2 family. NDH is composed of at least 16 different subunits, 5 of which are encoded in the nucleus.

The protein resides in the plastid. The protein localises to the chloroplast thylakoid membrane. The enzyme catalyses a plastoquinone + NADH + (n+1) H(+)(in) = a plastoquinol + NAD(+) + n H(+)(out). It carries out the reaction a plastoquinone + NADPH + (n+1) H(+)(in) = a plastoquinol + NADP(+) + n H(+)(out). In terms of biological role, NDH shuttles electrons from NAD(P)H:plastoquinone, via FMN and iron-sulfur (Fe-S) centers, to quinones in the photosynthetic chain and possibly in a chloroplast respiratory chain. The immediate electron acceptor for the enzyme in this species is believed to be plastoquinone. Couples the redox reaction to proton translocation, and thus conserves the redox energy in a proton gradient. This chain is NAD(P)H-quinone oxidoreductase subunit 2, chloroplastic, found in Zygnema circumcarinatum (Green alga).